The sequence spans 119 residues: Dihydroneopterin aldolase (119 aa).

Residues E21, Y53, and 72–73 (IE) contribute to the substrate site. K99 acts as the Proton donor/acceptor in catalysis.

It belongs to the DHNA family.

It catalyses the reaction 7,8-dihydroneopterin = 6-hydroxymethyl-7,8-dihydropterin + glycolaldehyde. It participates in cofactor biosynthesis; tetrahydrofolate biosynthesis; 2-amino-4-hydroxy-6-hydroxymethyl-7,8-dihydropteridine diphosphate from 7,8-dihydroneopterin triphosphate: step 3/4. Functionally, catalyzes the conversion of 7,8-dihydroneopterin to 6-hydroxymethyl-7,8-dihydropterin. This chain is Dihydroneopterin aldolase (folB), found in Streptococcus pyogenes serotype M6 (strain ATCC BAA-946 / MGAS10394).